We begin with the raw amino-acid sequence, 653 residues long: MIKITFPDGNFREYEAGITGWDIAGSISPRLQQDVLAAGVNGQVWDLHRPINEDAEVKLFKWDDAEGKHAFWHSSAHLMAEALEELYPGIKFGIGPAIENGFYYDVDPGEGISIKDADLPAIEKRMQDLAARKETIIRRDIAKADALRMFGDKDDQYKVELISELADGTITTYTQGGFTDLCRGPHLPNTGYIKAIKLLSVAGAYWRGDEKRKQLTRIYGISFPKKKMLDEYLELLEEAKKRDHRKIGKELELFAFSQNVGAGLPLWLPRGTQLRLRLEDFLKQIQKHFGYQQVITPHIGNKNLYITSGHYAKYGQDSFRPINTPQEGEEFMLKPMNCPHHCEIFKITPHSYRDLPIRLAEFGTVYRYEQSGELHGLTRVRGFTQDDAHLFCRPDQLKEEFCKVMDIIFIIFKALDFKNFEAQISLRDKVNREKYIGSEENWERAERAIIEACEEKGLPAVIEYGEAAFYGPKLDFMVKDALGRRWQLGTIQVDYNLPERFDLEYTGEDNKKHRPVMIHRAPFGSMERFVAVLIEHTAGKFPLWLTPDQVVVLPVSERFNEYAHRVAKELNQRDIRVQVDDRNEKVGRKIRDNELKRIPYMLIVGENESREEEVSVRKQGEGDMGIMKITTFAELIEKEVDDMISAWRKDYQN.

The 61-residue stretch at 1 to 61 folds into the TGS domain; sequence MIKITFPDGN…NEDAEVKLFK (61 aa). The interval 243 to 542 is catalytic; it reads DHRKIGKELE…LIEHTAGKFP (300 aa). Zn(2+) contacts are provided by cysteine 338, histidine 389, and histidine 519.

It belongs to the class-II aminoacyl-tRNA synthetase family. As to quaternary structure, homodimer. It depends on Zn(2+) as a cofactor.

It is found in the cytoplasm. The enzyme catalyses tRNA(Thr) + L-threonine + ATP = L-threonyl-tRNA(Thr) + AMP + diphosphate + H(+). Functionally, catalyzes the attachment of threonine to tRNA(Thr) in a two-step reaction: L-threonine is first activated by ATP to form Thr-AMP and then transferred to the acceptor end of tRNA(Thr). Also edits incorrectly charged L-seryl-tRNA(Thr). The protein is Threonine--tRNA ligase of Porphyromonas gingivalis (strain ATCC 33277 / DSM 20709 / CIP 103683 / JCM 12257 / NCTC 11834 / 2561).